Here is a 586-residue protein sequence, read N- to C-terminus: Arginine--tRNA ligase (586 aa).

A 'HIGH' region motif is present at residues 133–143 (ANPTGPLNIVS).

Belongs to the class-I aminoacyl-tRNA synthetase family. As to quaternary structure, monomer.

It is found in the cytoplasm. The catalysed reaction is tRNA(Arg) + L-arginine + ATP = L-arginyl-tRNA(Arg) + AMP + diphosphate. This is Arginine--tRNA ligase from Leptospira interrogans serogroup Icterohaemorrhagiae serovar copenhageni (strain Fiocruz L1-130).